The following is a 229-amino-acid chain: Potassium/proton antiporter CemA (229 aa).

3 helical membrane-spanning segments follow: residues 7-27 (FTPL…SLSF), 114-134 (IISF…LVIL), and 190-210 (ISGL…YWIF).

The protein belongs to the CemA family.

It is found in the plastid. The protein localises to the chloroplast inner membrane. The catalysed reaction is K(+)(in) + H(+)(out) = K(+)(out) + H(+)(in). Contributes to K(+)/H(+) antiport activity by supporting proton efflux to control proton extrusion and homeostasis in chloroplasts in a light-dependent manner to modulate photosynthesis. Prevents excessive induction of non-photochemical quenching (NPQ) under continuous-light conditions. Indirectly promotes efficient inorganic carbon uptake into chloroplasts. This is Potassium/proton antiporter CemA from Jasminum nudiflorum (Winter jasmine).